A 425-amino-acid chain; its full sequence is Pectate lyase L (425 aa).

The N-terminal stretch at 1-25 (MKYLNCFISTGLAAFFLVNSTSVLA) is a signal peptide. A disulfide bridge links C28 with C114. The Ca(2+) site is built by D209, D233, D234, and D237. K273 functions as the Proton acceptor in the catalytic mechanism. 5 residues coordinate Ca(2+): N402, S413, A416, D418, and E423.

This sequence belongs to the polysaccharide lyase 9 family. It depends on Ca(2+) as a cofactor.

Its subcellular location is the secreted. The catalysed reaction is Eliminative cleavage of (1-&gt;4)-alpha-D-galacturonan to give oligosaccharides with 4-deoxy-alpha-D-galact-4-enuronosyl groups at their non-reducing ends.. The protein operates within glycan metabolism; pectin degradation; 2-dehydro-3-deoxy-D-gluconate from pectin: step 2/5. Presents an endo-cleaving activity on polygalacturonate or partially methylated pectin. The chain is Pectate lyase L (pelL) from Dickeya chrysanthemi (Pectobacterium chrysanthemi).